The primary structure comprises 475 residues: Adenylyl cyclase-associated protein 1 (475 aa).

A2 bears the N-acetylalanine mark. Phosphotyrosine is present on Y31. Phosphoserine is present on S34. N6-acetyllysine is present on K81. Disordered regions lie at residues 216-255 (ELSGLPSGPSAGSGPPPPPPGPPPPPVSTSSGSDESASRS) and 278-318 (MKTH…TKKE). The segment covering 218-228 (SGLPSGPSAGS) has biased composition (low complexity). The segment covering 229-242 (GPPPPPPGPPPPPV) has biased composition (pro residues). Over residues 243–255 (STSSGSDESASRS) the composition is skewed to low complexity. N6-methyllysine is present on K287. S290, S295, and S301 each carry phosphoserine. Residue T307 is modified to Phosphothreonine. 2 positions are modified to phosphoserine: S308 and S310. The region spanning 313-453 (PATKKEPAVL…EGGDFNEFPV (141 aa)) is the C-CAP/cofactor C-like domain. A Glycyl lysine isopeptide (Lys-Gly) (interchain with G-Cter in SUMO1) cross-link involves residue K348.

Belongs to the CAP family. As to quaternary structure, homodimer. Binds actin monomers.

It is found in the cell membrane. Directly regulates filament dynamics and has been implicated in a number of complex developmental and morphological processes, including mRNA localization and the establishment of cell polarity. This chain is Adenylyl cyclase-associated protein 1 (CAP1), found in Pongo abelii (Sumatran orangutan).